The following is a 464-amino-acid chain: MRLVVIGVNHKTAPVALRERLALVGDEVSIALAQLQGFSDGSVIVSTCNRTEIYALVPESILSPHTLLPNSASAVVETSVIESSMTANNSANLSSTIISAHILKIKTWLAGFKQLSLDEIDPYLYVHRNTHALTHWLRVAAGLDSMILGEPQILGQIKRAVHMAQDQKALSNQLGWIVDQVFAAAKRVRNETQVGAQAVSLSYAAAKLVTQIFDDLPSRTLLVVAAGEMNRLVATHIAGLGVGRVIICNRNPERAEALAAELRNPNRRIEVRTLQELPQVLAEADIVSSCSGSMDILIDKTMTLRALKSRRYQPMLMIDLAVPRDIDSTVSRIDDVYLYSVDDLQHVIAGNIEQRRQAAVDAELLVSQLVVEMDRRFQVRQVGKDIQQYRTRTHEQVNKLLQASIAELHGDSANPEDIMIELTRRLTQNLTHAPSKLMRKAAREGDNELLDFVVSGLQDAHRNH.

Residues 47–50 (TCNR), Ser145, 150–152 (EPQ), and Gln156 contribute to the substrate site. The active-site Nucleophile is Cys48. Residue 225-230 (AAGEMN) participates in NADP(+) binding.

This sequence belongs to the glutamyl-tRNA reductase family. As to quaternary structure, homodimer.

It catalyses the reaction (S)-4-amino-5-oxopentanoate + tRNA(Glu) + NADP(+) = L-glutamyl-tRNA(Glu) + NADPH + H(+). Its pathway is porphyrin-containing compound metabolism; protoporphyrin-IX biosynthesis; 5-aminolevulinate from L-glutamyl-tRNA(Glu): step 1/2. In terms of biological role, catalyzes the NADPH-dependent reduction of glutamyl-tRNA(Glu) to glutamate 1-semialdehyde (GSA). The polypeptide is Glutamyl-tRNA reductase (Psychrobacter cryohalolentis (strain ATCC BAA-1226 / DSM 17306 / VKM B-2378 / K5)).